The chain runs to 121 residues: MSAVAEHIATQMPAPIVFTDSAAGKVKELVEEEGNPELKLRVFVQGGGCSGFQYGFTFDEIVNDDDTKMEKNGVMLLIDAMSLQYLVGAEIDYKEDLEGAQFVIKNPNATTTCGCGSSFST.

Residues Cys49, Cys113, and Cys115 each coordinate iron-sulfur cluster.

The protein belongs to the HesB/IscA family. Homodimer. The cofactor is iron-sulfur cluster.

Its function is as follows. Required for insertion of 4Fe-4S clusters. The protein is Putative iron-sulfur cluster insertion protein ErpA of Methylibium petroleiphilum (strain ATCC BAA-1232 / LMG 22953 / PM1).